Reading from the N-terminus, the 144-residue chain is Intraflagellar transport protein 25 homolog (144 aa).

Residues Asn29, Asp32, and Thr37 each coordinate Ca(2+).

Belongs to the IFT25 family. In terms of assembly, component of the IFT complex B, at least composed of IFT20, IFT22, IFT25, IFT27, IFT46, IFT52, TRAF3IP1/IFT54, IFT57, IFT74, IFT80, IFT81, and IFT88. Interacts with IFT27. Interacts with IFT88. Detected in placenta.

It localises to the cell projection. Its subcellular location is the cilium. Component of the IFT complex B required for sonic hedgehog/SHH signaling. May mediate transport of SHH components: required for the export of SMO and PTCH1 receptors out of the cilium and the accumulation of GLI2 at the ciliary tip in response to activation of the SHH pathway, suggesting it is involved in the dynamic transport of SHH signaling molecules within the cilium. Not required for ciliary assembly. Its role in intraflagellar transport is mainly seen in tissues rich in ciliated cells such as kidney and testis. Essential for male fertility, spermiogenesis and sperm flagella formation. Plays a role in the early development of the kidney. May be involved in the regulation of ureteric bud initiation. This is Intraflagellar transport protein 25 homolog from Homo sapiens (Human).